Here is a 447-residue protein sequence, read N- to C-terminus: MDEIWERAVEAALDGQTDRLATRTLTLDGAVKCVQGRLPPPSVLEKFQNLQHLSVANIGVSSLEQFPRLGNLQKLILSDNRITVGLEFLVEAGLDSFCDLDLSNNRIQFVEDLAPLAELKLVSLDLYECPVTRLKDYRSRVFGLIKTLKYLDKTDAEGNERPESDDEDDEEDEEDEEEEEEGDEEDPGSGEIDGDERAEAPRMSNGHSERVDGVVDVDEDEESDAEDDESEQATGVNGTSYRANGFRLEAVNGEEVREDDGDDSESGEEEVGEDNDVVEVHEIEDSENEEDGVDDEEDDEEDEEEEEVDNADRGLGGSGSTSRLMNAGEIDGHEQGDDDEDGDGETGEDDQGVEDDGEFADEDDDVEEEDEESGEGYLVQPVSQVEDHDAVGNDIEPINEDNDPDEEEEVEDDLPIPDQSLASSSRPKRKRDDDDDGEDDDDDDEER.

LRR repeat units lie at residues 49–70, 71–90, and 96–117; these read NLQH…PRLG, NLQK…EFLV, and SFCD…APLA. The LRRCT domain occupies 129 to 167; the sequence is CPVTRLKDYRSRVFGLIKTLKYLDKTDAEGNERPESDDE. Residues 155–447 are disordered; it reads DAEGNERPES…EDDDDDDEER (293 aa). Acidic residues-rich tracts occupy residues 163–194 and 215–231; these read ESDD…EIDG and VDVD…DESE. Positions 232–242 are enriched in polar residues; sequence QATGVNGTSYR. 5 stretches are compositionally biased toward acidic residues: residues 256-277, 284-309, 336-374, 397-415, and 433-447; these read VRED…DNDV, EDSE…EEVD, GDDD…EESG, PINE…DDLP, and DDDD…DEER.

The protein belongs to the ANP32 family.

In Arabidopsis thaliana (Mouse-ear cress), this protein is Acidic leucine-rich nuclear phosphoprotein 32-related protein.